A 361-amino-acid polypeptide reads, in one-letter code: Elongator complex protein 4 (361 aa).

2 disordered regions span residues 93–124 (QLPG…PQQE) and 338–361 (DDEQ…SLDF). Polar residues-rich tracts occupy residues 104-121 (NENS…SKNP) and 346-355 (ISNTNPQKQP).

This sequence belongs to the ELP4 family. In terms of assembly, component of the elongator complex.

It localises to the cytoplasm. The protein localises to the nucleus. Its pathway is tRNA modification; 5-methoxycarbonylmethyl-2-thiouridine-tRNA biosynthesis. In terms of biological role, component of the elongator complex, a multiprotein complex which is required for multiple tRNA modifications, including mcm5U (5-methoxycarbonylmethyl uridine), mcm5s2U (5-methoxycarbonylmethyl-2-thiouridine), and ncm5U (5-carbamoylmethyl uridine). The elongator complex catalyzes formation of carboxymethyluridine in the wobble base at position 34 in tRNAs. In Schizosaccharomyces pombe (strain 972 / ATCC 24843) (Fission yeast), this protein is Elongator complex protein 4.